A 166-amino-acid chain; its full sequence is Regulatory protein RecX (166 aa).

The protein belongs to the RecX family.

It is found in the cytoplasm. Its function is as follows. Modulates RecA activity. In Shigella sonnei (strain Ss046), this protein is Regulatory protein RecX.